Consider the following 235-residue polypeptide: MGMLAPGPLQGRRPRKGHKGQEDAVAPGCKASGRGSRVTHLLGYPTQNVSRSLRRKYAPPPCGGPEDVALAPCTAAAACEAGPSPVYVKVKSAEPADCAEGPVQCKNGLLVSSPHCEEPCAHSCAHPGLPPHLVHKLPLSYLQTQDTDAASRRINAPLAAGWSWLRLWLVTLASGVDFPQVSAWMRALPSPDCPGLRTTGEQMQKLLLKENKVKTRKSKRRSGEGSHLTTSILEQ.

Disordered regions lie at residues 1-36 (MGMLAPGPLQGRRPRKGHKGQEDAVAPGCKASGRGS) and 213-235 (VKTRKSKRRSGEGSHLTTSILEQ).

This is an uncharacterized protein from Homo sapiens (Human).